A 388-amino-acid polypeptide reads, in one-letter code: uncharacterized protein (388 aa).

A run of 8 helical transmembrane segments spans residues Val-15–Leu-37, Gly-97–Tyr-119, Pro-129–Leu-151, Phe-158–Ala-175, Met-179–Lys-196, Leu-203–Gln-225, Ile-304–Phe-326, and Leu-347–Leu-369.

It localises to the cell membrane. This is an uncharacterized protein from Aquifex aeolicus (strain VF5).